Reading from the N-terminus, the 119-residue chain is Holo-[acyl-carrier-protein] synthase (119 aa).

Mg(2+) contacts are provided by aspartate 2 and glutamate 51.

This sequence belongs to the P-Pant transferase superfamily. AcpS family. Mg(2+) serves as cofactor.

It is found in the cytoplasm. It catalyses the reaction apo-[ACP] + CoA = holo-[ACP] + adenosine 3',5'-bisphosphate + H(+). Functionally, transfers the 4'-phosphopantetheine moiety from coenzyme A to a Ser of acyl-carrier-protein. The chain is Holo-[acyl-carrier-protein] synthase from Chlorobium luteolum (strain DSM 273 / BCRC 81028 / 2530) (Pelodictyon luteolum).